Consider the following 307-residue polypeptide: MTFNDKLQAYIQLTRFDKPVGIELLLWPTLWGVLFAAMGQAQQQGEGVTAGLPSLSIFVVFALGAILMRAAGCAINDFADRKVDGHVSRTKGRPLADGRLSAKEAIAAFLVLVLLSASLLLFLPIQVFYWSFAAVILAFIYPFMKRYTHLPQVFLAAAFGWAIPMAYVAIQGAADIWCWLLFLAYMCWTVAYDTQYAMADRDDDVKIGVKSTAILFGRYDVIIISLLQILFLVIMGAVMWHYFVPTSLGITPVFGLALVAMMFAKQNSACASRNALACFQAFLANIWVGRYVFALIAIACVWTTFNG.

9 consecutive transmembrane segments (helical) span residues 19–39 (PVGI…AAMG), 48–68 (VTAG…AILM), 105–125 (AIAA…FLPI), 127–147 (VFYW…MKRY), 150–170 (LPQV…YVAI), 172–192 (GAAD…TVAY), 221–241 (VIII…VMWH), 243–263 (FVPT…AMMF), and 282–302 (FLAN…ACVW).

Belongs to the UbiA prenyltransferase family. Mg(2+) is required as a cofactor.

It is found in the cell inner membrane. The catalysed reaction is all-trans-octaprenyl diphosphate + 4-hydroxybenzoate = 4-hydroxy-3-(all-trans-octaprenyl)benzoate + diphosphate. The protein operates within cofactor biosynthesis; ubiquinone biosynthesis. In terms of biological role, catalyzes the prenylation of para-hydroxybenzoate (PHB) with an all-trans polyprenyl group. Mediates the second step in the final reaction sequence of ubiquinone-8 (UQ-8) biosynthesis, which is the condensation of the polyisoprenoid side chain with PHB, generating the first membrane-bound Q intermediate 3-octaprenyl-4-hydroxybenzoate. The polypeptide is 4-hydroxybenzoate octaprenyltransferase (Psychrobacter arcticus (strain DSM 17307 / VKM B-2377 / 273-4)).